Here is a 529-residue protein sequence, read N- to C-terminus: Bifunctional purine biosynthesis protein PurH (529 aa).

In terms of domain architecture, MGS-like spans 1–148 (MQQPRPIRRA…KNHKDVAIVV (148 aa)).

Belongs to the PurH family.

The catalysed reaction is (6R)-10-formyltetrahydrofolate + 5-amino-1-(5-phospho-beta-D-ribosyl)imidazole-4-carboxamide = 5-formamido-1-(5-phospho-D-ribosyl)imidazole-4-carboxamide + (6S)-5,6,7,8-tetrahydrofolate. It carries out the reaction IMP + H2O = 5-formamido-1-(5-phospho-D-ribosyl)imidazole-4-carboxamide. Its pathway is purine metabolism; IMP biosynthesis via de novo pathway; 5-formamido-1-(5-phospho-D-ribosyl)imidazole-4-carboxamide from 5-amino-1-(5-phospho-D-ribosyl)imidazole-4-carboxamide (10-formyl THF route): step 1/1. The protein operates within purine metabolism; IMP biosynthesis via de novo pathway; IMP from 5-formamido-1-(5-phospho-D-ribosyl)imidazole-4-carboxamide: step 1/1. The sequence is that of Bifunctional purine biosynthesis protein PurH from Serratia proteamaculans (strain 568).